We begin with the raw amino-acid sequence, 465 residues long: Gamma-aminobutyric acid receptor subunit rho-2 (465 aa).

A signal peptide spans 1-20 (MPYFSRLILFLFCLVVLVES). The Extracellular segment spans residues 21 to 260 (RKPKKRRWTG…LYINFTLRRH (240 aa)). Arginine 105 serves as a coordination point for 4-aminobutanoate. Residue asparagine 120 is glycosylated (N-linked (GlcNAc...) asparagine). Serine 169 is a binding site for 4-aminobutanoate. Cysteine 178 and cysteine 192 form a disulfide bridge. Glutamate 197 contacts 4-aminobutanoate. Asparagine 254 is a glycosylation site (N-linked (GlcNAc...) asparagine). Residues 261-281 (IFFFLLQTYFPATLMVMLSWV) traverse the membrane as a helical segment. The Cytoplasmic segment spans residues 282-293 (SFWIDRRAVPAR). A helical transmembrane segment spans residues 294 to 314 (VSLGITTVLTMSTIITGVNAS). The Extracellular portion of the chain corresponds to 315-325 (MPRVSYIKAVD). Residues 326–346 (IYLWVSFVFVFLSVLEYAAVN) form a helical membrane-spanning segment. Topologically, residues 347–444 (YLTTVQERKE…FQNTHAIDKY (98 aa)) are cytoplasmic. The helical transmembrane segment at 445-465 (SRLIFPASYIFFNLIYWSVFA) threads the bilayer.

This sequence belongs to the ligand-gated ion channel (TC 1.A.9) family. Gamma-aminobutyric acid receptor (TC 1.A.9.5) subfamily. GABRR2 sub-subfamily. As to quaternary structure, three rho subunits (rho-1/GBRR1, rho-2/GBRR2 and rho-3/GBRR3) coassemble either to form functional homopentamers or heteropentamers. Rho-2 is unable to form a functional homopentamer. Interacts with SQSTM1.

Its subcellular location is the postsynaptic cell membrane. It is found in the cell membrane. It catalyses the reaction chloride(in) = chloride(out). In terms of biological role, rho subunit of the pentameric ligand-gated chloride channels responsible for mediating the effects of gamma-aminobutyric acid (GABA), the major inhibitory neurotransmitter in the brain. Rho-containing GABA-gated chloride channels are a subclass of GABA(A) receptors (GABAARs) entirely composed of rho subunits, where GABA molecules bind at the rho intersubunit interfaces. When activated by GABA, rho-GABAARs selectively allow the flow of chloride anions across the cell membrane down their electrochemical gradient. Rho-2 GABAARs may contribute to the regulation of glial development in the cerebellum by controlling extrasynaptic transmission. Rho-2 GABAARs are also involved in neuronal tonic (extrasynaptic) and phasic (synaptic) transmission in the Purkinje neurons of the cerebellum. Rho-2 GABAARs expressed in retina may play a role in retinal neurotransmission. The chain is Gamma-aminobutyric acid receptor subunit rho-2 (GABRR2) from Bos taurus (Bovine).